A 104-amino-acid polypeptide reads, in one-letter code: Small ribosomal subunit protein uS10 (104 aa).

Belongs to the universal ribosomal protein uS10 family. As to quaternary structure, part of the 30S ribosomal subunit.

In terms of biological role, involved in the binding of tRNA to the ribosomes. The protein is Small ribosomal subunit protein uS10 of Dichelobacter nodosus (strain VCS1703A).